The sequence spans 349 residues: Tetraacyldisaccharide 4'-kinase (349 aa).

Residue 58–65 (TAGGSGKT) coordinates ATP.

Belongs to the LpxK family.

The catalysed reaction is a lipid A disaccharide + ATP = a lipid IVA + ADP + H(+). It functions in the pathway glycolipid biosynthesis; lipid IV(A) biosynthesis; lipid IV(A) from (3R)-3-hydroxytetradecanoyl-[acyl-carrier-protein] and UDP-N-acetyl-alpha-D-glucosamine: step 6/6. Its function is as follows. Transfers the gamma-phosphate of ATP to the 4'-position of a tetraacyldisaccharide 1-phosphate intermediate (termed DS-1-P) to form tetraacyldisaccharide 1,4'-bis-phosphate (lipid IVA). This chain is Tetraacyldisaccharide 4'-kinase, found in Shewanella amazonensis (strain ATCC BAA-1098 / SB2B).